A 317-amino-acid polypeptide reads, in one-letter code: Melanocyte-stimulating hormone receptor (317 aa).

The Extracellular segment spans residues 1 to 37 (MPVQGSQRRLLGSLNSTPTATPKLGLAANQTGAQCLE). Asn29 carries an N-linked (GlcNAc...) asparagine glycan. A helical transmembrane segment spans residues 38–63 (VSIPDGLFLSLGLVSLVENVLVVAAI). Residues 64–72 (ARNRNLHSP) lie on the Cytoplasmic side of the membrane. Residues 73–93 (MYCFICCLALSDLLVSGSNML) traverse the membrane as a helical segment. At 94–118 (ETAVILLLEAGALAARAAVVQQLDN) the chain is on the extracellular side. A helical membrane pass occupies residues 119–140 (VIDVITCSSMLSSLCFLGAIAM). Over 141–163 (DRYISIFYALRYHSIVTLPRARG) the chain is Cytoplasmic. A helical membrane pass occupies residues 164-183 (VVAAIWVASILFSTLFIAYY). At 184–191 (DHVAVLLC) the chain is on the extracellular side. Residues 192–211 (LVVFFLAMLVLMAVLYVHML) traverse the membrane as a helical segment. Topologically, residues 212 to 240 (ARACQHAQGIAQLHKRQRPAHQGVGLKGA) are cytoplasmic. Residues 241–266 (ATLTILLGIFFLCWGPFFLHLTLIVL) form a helical membrane-spanning segment. Residues 267–279 (CPQHPTCSCIFKN) are Extracellular-facing. A helical membrane pass occupies residues 280 to 300 (FNLFLALIICNAIIDPLIYAF). Residues 301 to 317 (RSQELRRTLKKVLLCSW) lie on the Cytoplasmic side of the membrane. The S-palmitoyl cysteine moiety is linked to residue Cys315.

Belongs to the G-protein coupled receptor 1 family. Interacts with MGRN1, but does not undergo MGRN1-mediated ubiquitination; this interaction competes with GNAS-binding and thus inhibits agonist-induced cAMP production. Interacts with OPN3; the interaction results in a decrease in MC1R-mediated cAMP signaling and ultimately a decrease in melanin production in melanocytes.

It localises to the cell membrane. Its function is as follows. Receptor for MSH (alpha, beta and gamma) and ACTH. The activity of this receptor is mediated by G proteins which activate adenylate cyclase. Mediates melanogenesis, the production of eumelanin (black/brown) and phaeomelanin (red/yellow), via regulation of cAMP signaling in melanocytes. This is Melanocyte-stimulating hormone receptor (MC1R) from Presbytis comata (Grizzled leaf monkey).